We begin with the raw amino-acid sequence, 301 residues long: Probable alpha-L-glutamate ligase (301 aa).

The ATP-grasp domain maps to 104–287 (LQLLSRKGIG…VADEIIRFIE (184 aa)). ATP contacts are provided by residues Lys141, 178-179 (EF), Asp187, and 211-213 (RSN). Mg(2+) contacts are provided by Asp248, Glu260, and Asn262. Mn(2+)-binding residues include Asp248, Glu260, and Asn262.

It belongs to the RimK family. It depends on Mg(2+) as a cofactor. The cofactor is Mn(2+).

In Syntrophotalea carbinolica (strain DSM 2380 / NBRC 103641 / GraBd1) (Pelobacter carbinolicus), this protein is Probable alpha-L-glutamate ligase.